A 410-amino-acid polypeptide reads, in one-letter code: Na(+)-translocating NADH-quinone reductase subunit B (410 aa).

The next 3 helical transmembrane spans lie at 56–76 (MMIL…YNVG), 119–139 (LFGA…GGFW), and 159–179 (SILF…ALGI). T232 bears the FMN phosphoryl threonine mark. A run of 5 helical transmembrane segments spans residues 266–286 (GSIG…IVFA), 293–313 (IIAG…FIGS), 318–338 (MFAM…GMLF), 347–367 (SFTN…CVLI), and 377–397 (GMML…YFVA).

This sequence belongs to the NqrB/RnfD family. Composed of six subunits; NqrA, NqrB, NqrC, NqrD, NqrE and NqrF. It depends on FMN as a cofactor.

It localises to the cell inner membrane. It carries out the reaction a ubiquinone + n Na(+)(in) + NADH + H(+) = a ubiquinol + n Na(+)(out) + NAD(+). NQR complex catalyzes the reduction of ubiquinone-1 to ubiquinol by two successive reactions, coupled with the transport of Na(+) ions from the cytoplasm to the periplasm. NqrA to NqrE are probably involved in the second step, the conversion of ubisemiquinone to ubiquinol. This is Na(+)-translocating NADH-quinone reductase subunit B from Neisseria meningitidis serogroup A / serotype 4A (strain DSM 15465 / Z2491).